A 447-amino-acid polypeptide reads, in one-letter code: MREILHIQGGQCGNQIGAKFWEVICGEHCVDSTGRYSGTSSQQLELERINVYYNEAGGGRYVPRAVLMDLEPGTMESIRAGPFGGIFRPDNFVYGQSGAGNNWAKGHYTEGAELIDSVLDVVRKEAENCDCLQGFQVCHSLGGGTGSGMGTLLISKIREEYPDRMMLTFSVFPSPKVSDTVVEPYNATLSVHQLVENADECMVLDNEALYDICFRTLKLTNPSFGDLNHLISATMSGVTCCLRFPGQLNSDLRKLAVNLIPFPRLHFFMVGFAPLTSRGSQQYRALTVPELTQQMWDAKNMMCSADPRHGRYLTASAMFRGKMSTKEVDEQMINVQNKNSSYFVEWIPNNVKSSVCDIPPVGLPMASTFVGNSTSIQEMFRRVSEQFTAMFRRKAFLHWYTSEGMDEMEFTEAESNMNDLVAEYQQYQDATAEEYEEEEHDGEEEHA.

GTP is bound by residues Gln11, Glu71, Ser140, Gly144, Thr145, Gly146, Asn206, and Asn228. Residue Glu71 participates in Mg(2+) binding. Residues 428 to 447 (QDATAEEYEEEEHDGEEEHA) form a disordered region. Acidic residues predominate over residues 431 to 447 (TAEEYEEEEHDGEEEHA).

The protein belongs to the tubulin family. In terms of assembly, dimer of alpha and beta chains. A typical microtubule is a hollow water-filled tube with an outer diameter of 25 nm and an inner diameter of 15 nM. Alpha-beta heterodimers associate head-to-tail to form protofilaments running lengthwise along the microtubule wall with the beta-tubulin subunit facing the microtubule plus end conferring a structural polarity. Microtubules usually have 13 protofilaments but different protofilament numbers can be found in some organisms and specialized cells. Mg(2+) serves as cofactor.

It is found in the cytoplasm. The protein localises to the cytoskeleton. In terms of biological role, tubulin is the major constituent of microtubules, a cylinder consisting of laterally associated linear protofilaments composed of alpha- and beta-tubulin heterodimers. Microtubules grow by the addition of GTP-tubulin dimers to the microtubule end, where a stabilizing cap forms. Below the cap, tubulin dimers are in GDP-bound state, owing to GTPase activity of alpha-tubulin. The polypeptide is Tubulin beta-4 chain (TUBB4) (Zea mays (Maize)).